The sequence spans 664 residues: Kinesin-like protein KIF2B (664 aa).

Phosphothreonine; by PLK1 is present on threonine 125. Residues cysteine 149–aspartate 177 adopt a coiled-coil conformation. Residue serine 204 is modified to Phosphoserine; by PLK1. The region spanning arginine 213–leucine 543 is the Kinesin motor domain. Glycine 303 to threonine 310 lines the ATP pocket. The disordered stretch occupies residues valine 583–serine 607. The stretch at valine 642–alanine 663 forms a coiled coil.

It belongs to the TRAFAC class myosin-kinesin ATPase superfamily. Kinesin family. MCAK/KIF2 subfamily. Post-translationally, phosphorylation at Thr-125 by PLK1 is required for activity in the correction of kinetochore-microtubules attachment errors, while phosphorylation at Ser-204 also by PLK1 is required for the kinetochore localization and activity in prometaphase.

The protein localises to the cytoplasm. The protein resides in the cytoskeleton. It localises to the microtubule organizing center. It is found in the centrosome. Its subcellular location is the spindle. The protein localises to the chromosome. The protein resides in the centromere. It localises to the kinetochore. Its function is as follows. Plus end-directed microtubule-dependent motor required for spindle assembly and chromosome movement. Has microtubule depolymerization activity. Plays a role in chromosome congression. The chain is Kinesin-like protein KIF2B from Rattus norvegicus (Rat).